A 152-amino-acid polypeptide reads, in one-letter code: Large ribosomal subunit protein bL9 (152 aa).

The protein belongs to the bacterial ribosomal protein bL9 family.

Binds to the 23S rRNA. This is Large ribosomal subunit protein bL9 from Streptococcus thermophilus (strain CNRZ 1066).